We begin with the raw amino-acid sequence, 153 residues long: Ribosomal RNA large subunit methyltransferase H (153 aa).

S-adenosyl-L-methionine-binding positions include L63, G102, and 121-126; that span reads FGKITL.

The protein belongs to the RNA methyltransferase RlmH family. In terms of assembly, homodimer.

It localises to the cytoplasm. It carries out the reaction pseudouridine(1915) in 23S rRNA + S-adenosyl-L-methionine = N(3)-methylpseudouridine(1915) in 23S rRNA + S-adenosyl-L-homocysteine + H(+). In terms of biological role, specifically methylates the pseudouridine at position 1915 (m3Psi1915) in 23S rRNA. The protein is Ribosomal RNA large subunit methyltransferase H of Sulfurovum sp. (strain NBC37-1).